A 602-amino-acid polypeptide reads, in one-letter code: Glutamyl-tRNA(Gln) amidotransferase subunit B, mitochondrial (602 aa).

The transit peptide at 1–56 directs the protein to the mitochondrion; the sequence is MFRSCLRHCRRATVRSRTCPRCSHHEIPQLQVVQRQISLSSSFPHIRRLQTSSTDT.

Belongs to the GatB/GatE family. GatB subfamily. Subunit of the heterotrimeric GatCAB amidotransferase (AdT) complex, composed of A, B and C subunits.

It is found in the mitochondrion. The enzyme catalyses L-glutamyl-tRNA(Gln) + L-glutamine + ATP + H2O = L-glutaminyl-tRNA(Gln) + L-glutamate + ADP + phosphate + H(+). Its function is as follows. Allows the formation of correctly charged Gln-tRNA(Gln) through the transamidation of misacylated Glu-tRNA(Gln) in the mitochondria. The reaction takes place in the presence of glutamine and ATP through an activated gamma-phospho-Glu-tRNA(Gln). The chain is Glutamyl-tRNA(Gln) amidotransferase subunit B, mitochondrial (nempA) from Emericella nidulans (strain FGSC A4 / ATCC 38163 / CBS 112.46 / NRRL 194 / M139) (Aspergillus nidulans).